Consider the following 191-residue polypeptide: NF-kappa-B inhibitor-interacting Ras-like protein 2 (191 aa).

The small GTPase-like stretch occupies residues 1–191; the sequence is MGKSCKVVVC…KNKGSGSLDG (191 aa). Position 11–18 (11–18) interacts with GTP; the sequence is GQASVGKT. Residues 35–43 carry the Effector region motif; the sequence is MIETQEDIY. Residues 61–65 and 120–123 contribute to the GTP site; these read DTRGL and NKCD. A disordered region spans residues 169–191; the sequence is TQPQSKSAFPLSRKNKGSGSLDG.

Belongs to the small GTPase superfamily. Ras family. KappaB-Ras subfamily. Interacts with both NF-kappa-B inhibitor alpha (NFKBIA) and beta (NFKBIB) in vitro. However, it probably only interacts with NFKBIB in vivo. Interacts with GFOD1.

It is found in the cytoplasm. Its function is as follows. Atypical Ras-like protein that acts as a potent regulator of NF-kappa-B activity by preventing the degradation of NF-kappa-B inhibitor beta (NFKBIB) by most signals, explaining why NFKBIB is more resistant to degradation. May act by blocking phosphorylation of NFKBIB and nuclear localization of p65/RELA NF-kappa-B subunit. It is unclear whether it acts as a GTPase. Both GTP- and GDP-bound forms block phosphorylation of NFKBIB. The protein is NF-kappa-B inhibitor-interacting Ras-like protein 2 (Nkiras2) of Mus musculus (Mouse).